We begin with the raw amino-acid sequence, 123 residues long: Small ribosomal subunit protein uS13c (123 aa).

The segment at 99-123 (GQRTRSNARTRRGAKKTVAGKKLAK) is disordered. The span at 100 to 123 (QRTRSNARTRRGAKKTVAGKKLAK) shows a compositional bias: basic residues.

Belongs to the universal ribosomal protein uS13 family. In terms of assembly, part of the 30S ribosomal subunit.

It localises to the plastid. The protein localises to the chloroplast. Functionally, located at the top of the head of the 30S subunit, it contacts several helices of the 16S rRNA. The polypeptide is Small ribosomal subunit protein uS13c (Cyanidioschyzon merolae (strain NIES-3377 / 10D) (Unicellular red alga)).